A 182-amino-acid chain; its full sequence is UPF0148 protein VNG_2366C (182 aa).

A disordered region spans residues 1-162 (MSNTDDGFDK…RASDADDPRT (162 aa)). Basic and acidic residues-rich tracts occupy residues 7–33 (GFDKEAAREELREKYNADQQDREETAR) and 47–62 (DHCDRCGTPLFRHDGE). Residues 105–122 (PDTSSSTAAATDDVPTAA) are compositionally biased toward low complexity. Basic and acidic residues predominate over residues 153-162 (RASDADDPRT).

It belongs to the UPF0148 family.

The protein is UPF0148 protein VNG_2366C of Halobacterium salinarum (strain ATCC 700922 / JCM 11081 / NRC-1) (Halobacterium halobium).